The following is a 535-amino-acid chain: 4-hydroxy-3-methylbut-2-enyl diphosphate reductase, apicoplast (535 aa).

Cysteine 231 lines the [4Fe-4S] cluster pocket. (2E)-4-hydroxy-3-methylbut-2-enyl diphosphate contacts are provided by histidine 260 and histidine 293. The dimethylallyl diphosphate site is built by histidine 260 and histidine 293. Isopentenyl diphosphate is bound by residues histidine 260 and histidine 293. Cysteine 315 serves as a coordination point for [4Fe-4S] cluster. Position 343 (histidine 343) interacts with (2E)-4-hydroxy-3-methylbut-2-enyl diphosphate. Histidine 343 lines the dimethylallyl diphosphate pocket. Histidine 343 serves as a coordination point for isopentenyl diphosphate. The active-site Proton donor is the glutamate 345. Threonine 383 provides a ligand contact to (2E)-4-hydroxy-3-methylbut-2-enyl diphosphate. Cysteine 413 provides a ligand contact to [4Fe-4S] cluster. Residues serine 441, serine 442, asparagine 443, and serine 485 each coordinate (2E)-4-hydroxy-3-methylbut-2-enyl diphosphate. 4 residues coordinate dimethylallyl diphosphate: serine 441, serine 442, asparagine 443, and serine 485. The isopentenyl diphosphate site is built by serine 441, serine 442, asparagine 443, and serine 485.

Belongs to the IspH family. Interacts with Fd/ferredoxin. [4Fe-4S] cluster is required as a cofactor.

It is found in the plastid. The protein resides in the apicoplast. It catalyses the reaction dimethylallyl diphosphate + 2 oxidized [2Fe-2S]-[ferredoxin] + H2O = (2E)-4-hydroxy-3-methylbut-2-enyl diphosphate + 2 reduced [2Fe-2S]-[ferredoxin] + 2 H(+). The catalysed reaction is isopentenyl diphosphate + 2 oxidized [2Fe-2S]-[ferredoxin] + H2O = (2E)-4-hydroxy-3-methylbut-2-enyl diphosphate + 2 reduced [2Fe-2S]-[ferredoxin] + 2 H(+). It participates in isoprenoid biosynthesis; dimethylallyl diphosphate biosynthesis; dimethylallyl diphosphate from (2E)-4-hydroxy-3-methylbutenyl diphosphate: step 1/1. Its pathway is isoprenoid biosynthesis; isopentenyl diphosphate biosynthesis via DXP pathway; isopentenyl diphosphate from 1-deoxy-D-xylulose 5-phosphate: step 6/6. In terms of biological role, catalyzes the conversion of 1-hydroxy-2-methyl-2-(E)-butenyl 4-diphosphate (HMBPP) into a mixture of isopentenyl diphosphate (IPP) and dimethylallyl diphosphate (DMAPP). Acts in the terminal step of the DOXP/MEP pathway for isoprenoid precursor biosynthesis. The sequence is that of 4-hydroxy-3-methylbut-2-enyl diphosphate reductase, apicoplast from Plasmodium falciparum (isolate 3D7).